A 203-amino-acid chain; its full sequence is ATP-dependent Clp protease proteolytic subunit (203 aa).

Catalysis depends on Ser107, which acts as the Nucleophile. Residue His132 is part of the active site.

The protein belongs to the peptidase S14 family. In terms of assembly, fourteen ClpP subunits assemble into 2 heptameric rings which stack back to back to give a disk-like structure with a central cavity, resembling the structure of eukaryotic proteasomes.

It localises to the cytoplasm. The enzyme catalyses Hydrolysis of proteins to small peptides in the presence of ATP and magnesium. alpha-casein is the usual test substrate. In the absence of ATP, only oligopeptides shorter than five residues are hydrolyzed (such as succinyl-Leu-Tyr-|-NHMec, and Leu-Tyr-Leu-|-Tyr-Trp, in which cleavage of the -Tyr-|-Leu- and -Tyr-|-Trp bonds also occurs).. Functionally, cleaves peptides in various proteins in a process that requires ATP hydrolysis. Has a chymotrypsin-like activity. Plays a major role in the degradation of misfolded proteins. The polypeptide is ATP-dependent Clp protease proteolytic subunit (Shewanella loihica (strain ATCC BAA-1088 / PV-4)).